The following is a 349-amino-acid chain: ATPase GET3 (349 aa).

26–33 contacts ATP; sequence KGGVGKTT. Asp-57 is a catalytic residue. ATP is bound by residues Glu-243 and Asn-270. Residues Cys-280 and Cys-283 each contribute to the Zn(2+) site.

Belongs to the arsA ATPase family. Homodimer. Component of the Golgi to ER traffic (GET) complex, which is composed of GET1, GET2 and GET3. Within the complex, GET1 and GET2 form a heterotetramer which is stabilized by phosphatidylinositol binding and which binds to the GET3 homodimer. Interacts with the chloride channel protein GEF1.

Its subcellular location is the cytoplasm. It is found in the endoplasmic reticulum. It localises to the golgi apparatus. In terms of biological role, ATPase required for the post-translational delivery of tail-anchored (TA) proteins to the endoplasmic reticulum. Recognizes and selectively binds the transmembrane domain of TA proteins in the cytosol. This complex then targets to the endoplasmic reticulum by membrane-bound receptors GET1 and GET2, where the tail-anchored protein is released for insertion. This process is regulated by ATP binding and hydrolysis. ATP binding drives the homodimer towards the closed dimer state, facilitating recognition of newly synthesized TA membrane proteins. ATP hydrolysis is required for insertion. Subsequently, the homodimer reverts towards the open dimer state, lowering its affinity for the GET1-GET2 receptor, and returning it to the cytosol to initiate a new round of targeting. Cooperates with the HDEL receptor ERD2 to mediate the ATP-dependent retrieval of resident ER proteins that contain a C-terminal H-D-E-L retention signal from the Golgi to the ER. Involved in low-level resistance to the oxyanions arsenite and arsenate, and in heat tolerance. This is ATPase GET3 from Clavispora lusitaniae (strain ATCC 42720) (Yeast).